A 487-amino-acid chain; its full sequence is 26S proteasome non-ATPase regulatory subunit 3 homolog B (487 aa).

A disordered region spans residues 1 to 21 (MTQDVEMKDNQTPTQSVVSAP). Residues 10–21 (NQTPTQSVVSAP) are compositionally biased toward polar residues. In terms of domain architecture, PCI spans 239–420 (CRYLFYLGKI…GCMVSKETGD (182 aa)). The segment at 452 to 487 (PPNTHREKESEEKRREMKQQEEELAKYMAEEDDDDF) is disordered. The segment covering 455-480 (THREKESEEKRREMKQQEEELAKYMA) has biased composition (basic and acidic residues).

Belongs to the proteasome subunit S3 family. Component of the 19S regulatory particle (RP/PA700) lid subcomplex of the 26S proteasome. The 26S proteasome is composed of a core protease (CP), known as the 20S proteasome, capped at one or both ends by the 19S regulatory particle (RP/PA700). The RP/PA700 complex is composed of at least 17 different subunits in two subcomplexes, the base and the lid, which form the portions proximal and distal to the 20S proteolytic core, respectively. Interacts with UCH1 and UCH2. In terms of tissue distribution, preferentially expressed in flowers.

In terms of biological role, acts as a regulatory subunit of the 26 proteasome which is involved in the ATP-dependent degradation of ubiquitinated proteins. This is 26S proteasome non-ATPase regulatory subunit 3 homolog B from Arabidopsis thaliana (Mouse-ear cress).